The following is a 221-amino-acid chain: Deoxyribose-phosphate aldolase (221 aa).

The Proton donor/acceptor role is filled by Asp90. Lys152 functions as the Schiff-base intermediate with acetaldehyde in the catalytic mechanism. Catalysis depends on Lys181, which acts as the Proton donor/acceptor.

This sequence belongs to the DeoC/FbaB aldolase family. DeoC type 1 subfamily.

Its subcellular location is the cytoplasm. The enzyme catalyses 2-deoxy-D-ribose 5-phosphate = D-glyceraldehyde 3-phosphate + acetaldehyde. The protein operates within carbohydrate degradation; 2-deoxy-D-ribose 1-phosphate degradation; D-glyceraldehyde 3-phosphate and acetaldehyde from 2-deoxy-alpha-D-ribose 1-phosphate: step 2/2. Its function is as follows. Catalyzes a reversible aldol reaction between acetaldehyde and D-glyceraldehyde 3-phosphate to generate 2-deoxy-D-ribose 5-phosphate. This is Deoxyribose-phosphate aldolase from Syntrophotalea carbinolica (strain DSM 2380 / NBRC 103641 / GraBd1) (Pelobacter carbinolicus).